The following is an 80-amino-acid chain: Ubiquinol-cytochrome c reductase complex assembly factor 5 (80 aa).

The Mitochondrial matrix portion of the chain corresponds to 1–19 (MFSRAQVRRALQRVPGKQR). A helical transmembrane segment spans residues 20-41 (FGIYRFLPFFFVLGGAMEWIMI). Over 42–80 (KVRVGQETFYDVYRRKASERQYQRRLEDTSETNLHKLIK) the chain is Mitochondrial intermembrane.

The protein belongs to the UQCC5 family. As to quaternary structure, associates with the mitochondrial ribosome. Interacts with UQCC6. Interacts with MT-CYB; interacts with newly synthesizes MT-CYB. Forms a complex, named COMB/coordinator of mitochondrial CYTB biogenesis, composed of UQCC1, UQCC2, UQCC4, UQCC5 and UQCC6; stabilizes nascent cytochrome b/MT-CYB and promotes its membrane insertion.

The protein localises to the mitochondrion inner membrane. Required for the assembly and stability of the mitochondrial ubiquinol-cytochrome c reductase complex (complex III (CIII) or cytochrome b-c1 complex), a multisubunit transmembrane complex that is part of the mitochondrial electron transport chain (ETC) which drives oxidative phosphorylation. Mediates early complex III biogenesis. Participates in regulating the levels of electron transport chain proteins, and therefore energy supply, in response to changes in energy demand. Also required for cytochrome c oxidase complex (complex IV) assembly. In Mus musculus (Mouse), this protein is Ubiquinol-cytochrome c reductase complex assembly factor 5.